An 800-amino-acid chain; its full sequence is Phenylalanine--tRNA ligase beta subunit (800 aa).

A tRNA-binding domain is found at 39-154 (TKEIKNLVVG…TEVKPGTDAL (116 aa)). The B5 domain occupies 408–483 (CFVTPIDISV…RIYGYDKIPS (76 aa)). Mg(2+) is bound by residues D461, D467, E470, and E471. One can recognise an FDX-ACB domain in the interval 708-800 (PRFPGVSRDI…ALKSEGATIR (93 aa)).

The protein belongs to the phenylalanyl-tRNA synthetase beta subunit family. Type 1 subfamily. Tetramer of two alpha and two beta subunits. Requires Mg(2+) as cofactor.

The protein localises to the cytoplasm. The enzyme catalyses tRNA(Phe) + L-phenylalanine + ATP = L-phenylalanyl-tRNA(Phe) + AMP + diphosphate + H(+). In Staphylococcus saprophyticus subsp. saprophyticus (strain ATCC 15305 / DSM 20229 / NCIMB 8711 / NCTC 7292 / S-41), this protein is Phenylalanine--tRNA ligase beta subunit.